Reading from the N-terminus, the 230-residue chain is Large ribosomal subunit protein uL1 (230 aa).

This sequence belongs to the universal ribosomal protein uL1 family. In terms of assembly, part of the 50S ribosomal subunit.

Its function is as follows. Binds directly to 23S rRNA. The L1 stalk is quite mobile in the ribosome, and is involved in E site tRNA release. Functionally, protein L1 is also a translational repressor protein, it controls the translation of the L11 operon by binding to its mRNA. The sequence is that of Large ribosomal subunit protein uL1 from Oenococcus oeni (strain ATCC BAA-331 / PSU-1).